A 396-amino-acid chain; its full sequence is MAKAKFERTKPHVNIGTIGHVDHGKTTTTAAITKVLADTYPELNEAFAFDSIDKAPEEKERGITINISHVEYQTEKRHYAHVDAPGHADYIKNMITGAAQMDGAILVVAATDGPMPQTREHVLLARQVGVPYILVALNKCDMVEDEEIIELVEMEVRELLAEQDYDEEAPIVHISALKALEGDEKWGKQILELMQACDDNIPDPVRETDKPFLMPIEDIFTITGRGTVVTGRVERGTLNVNDDVDIIGIKEKSTSTTVTGIEMFRKLLDSAEAGDNCGLLLRGIKREDVERGQVIVKPGAYTPHTEFEGSVYVLSKDEGGRHTPFFDNYRPQFYFRTTDVTGVVKLPEGTEMVMPGDNVDMSVTLIQPVAMDEGLRFAIREGSRTVGAGRVTKIIK.

One can recognise a tr-type G domain in the interval 10-205 (KPHVNIGTIG…ACDDNIPDPV (196 aa)). The tract at residues 19 to 26 (GHVDHGKT) is G1. A GTP-binding site is contributed by 19-26 (GHVDHGKT). Thr-26 contributes to the Mg(2+) binding site. Residues 62–66 (GITIN) form a G2 region. Residues 83-86 (DAPG) are G3. Residues 83-87 (DAPGH) and 138-141 (NKCD) contribute to the GTP site. The segment at 138 to 141 (NKCD) is G4. Residues 175–177 (SAL) are G5.

Belongs to the TRAFAC class translation factor GTPase superfamily. Classic translation factor GTPase family. EF-Tu/EF-1A subfamily. In terms of assembly, monomer.

The protein localises to the cytoplasm. The enzyme catalyses GTP + H2O = GDP + phosphate + H(+). GTP hydrolase that promotes the GTP-dependent binding of aminoacyl-tRNA to the A-site of ribosomes during protein biosynthesis. In Corynebacterium glutamicum (strain ATCC 13032 / DSM 20300 / JCM 1318 / BCRC 11384 / CCUG 27702 / LMG 3730 / NBRC 12168 / NCIMB 10025 / NRRL B-2784 / 534), this protein is Elongation factor Tu.